The following is a 165-amino-acid chain: Thiol peroxidase (165 aa).

Positions 18 to 165 constitute a Thioredoxin domain; that stretch reads PQVGDNLAEF…DYDAALAALN (148 aa). Residue cysteine 60 is the Cysteine sulfenic acid (-SOH) intermediate of the active site. Residues cysteine 60 and cysteine 94 are joined by a disulfide bond.

Belongs to the peroxiredoxin family. Tpx subfamily. In terms of assembly, homodimer.

The catalysed reaction is a hydroperoxide + [thioredoxin]-dithiol = an alcohol + [thioredoxin]-disulfide + H2O. In terms of biological role, thiol-specific peroxidase that catalyzes the reduction of hydrogen peroxide and organic hydroperoxides to water and alcohols, respectively. Plays a role in cell protection against oxidative stress by detoxifying peroxides. The protein is Thiol peroxidase of Corynebacterium glutamicum (strain ATCC 13032 / DSM 20300 / JCM 1318 / BCRC 11384 / CCUG 27702 / LMG 3730 / NBRC 12168 / NCIMB 10025 / NRRL B-2784 / 534).